A 659-amino-acid chain; its full sequence is Threonine--tRNA ligase (659 aa).

One can recognise a TGS domain in the interval Met1–Thr60. Catalytic regions lie at residues Thr234 to Ala548 and Asp252 to Pro552. Zn(2+) contacts are provided by Cys349, His400, and His529.

This sequence belongs to the class-II aminoacyl-tRNA synthetase family. In terms of assembly, homodimer. The cofactor is Zn(2+).

Its subcellular location is the cytoplasm. The enzyme catalyses tRNA(Thr) + L-threonine + ATP = L-threonyl-tRNA(Thr) + AMP + diphosphate + H(+). Catalyzes the attachment of threonine to tRNA(Thr) in a two-step reaction: L-threonine is first activated by ATP to form Thr-AMP and then transferred to the acceptor end of tRNA(Thr). Also edits incorrectly charged L-seryl-tRNA(Thr). The polypeptide is Threonine--tRNA ligase (Thermus thermophilus (strain ATCC 27634 / DSM 579 / HB8)).